A 335-amino-acid chain; its full sequence is Beta-ketoacyl-[acyl-carrier-protein] synthase III 3 (335 aa).

Residues C114 and H256 contribute to the active site. Residues 257–261 (QANHR) are ACP-binding. The active site involves N286.

This sequence belongs to the thiolase-like superfamily. FabH family. Homodimer.

It is found in the cytoplasm. The catalysed reaction is malonyl-[ACP] + acetyl-CoA + H(+) = 3-oxobutanoyl-[ACP] + CO2 + CoA. The protein operates within lipid metabolism; fatty acid biosynthesis. Functionally, catalyzes the condensation reaction of fatty acid synthesis by the addition to an acyl acceptor of two carbons from malonyl-ACP. Catalyzes the first condensation reaction which initiates fatty acid synthesis and may therefore play a role in governing the total rate of fatty acid production. Possesses both acetoacetyl-ACP synthase and acetyl transacylase activities. Its substrate specificity determines the biosynthesis of branched-chain and/or straight-chain of fatty acids. The protein is Beta-ketoacyl-[acyl-carrier-protein] synthase III 3 of Streptomyces coelicolor (strain ATCC BAA-471 / A3(2) / M145).